A 437-amino-acid chain; its full sequence is 3-ketoacyl-CoA thiolase (437 aa).

The active-site Acyl-thioester intermediate is Cys-99. Active-site proton acceptor residues include His-392 and Cys-422.

This sequence belongs to the thiolase-like superfamily. Thiolase family. Heterotetramer of two alpha chains (FadJ) and two beta chains (FadI).

It localises to the cytoplasm. The enzyme catalyses an acyl-CoA + acetyl-CoA = a 3-oxoacyl-CoA + CoA. Its pathway is lipid metabolism; fatty acid beta-oxidation. In terms of biological role, catalyzes the final step of fatty acid oxidation in which acetyl-CoA is released and the CoA ester of a fatty acid two carbons shorter is formed. This chain is 3-ketoacyl-CoA thiolase, found in Pectobacterium carotovorum subsp. carotovorum (strain PC1).